The primary structure comprises 446 residues: ATP-dependent protease ATPase subunit HslU (446 aa).

ATP is bound by residues Ile17, 59–64, Asp255, Glu320, and Arg392; that span reads GVGKTE.

Belongs to the ClpX chaperone family. HslU subfamily. A double ring-shaped homohexamer of HslV is capped on each side by a ring-shaped HslU homohexamer. The assembly of the HslU/HslV complex is dependent on binding of ATP.

It is found in the cytoplasm. Its function is as follows. ATPase subunit of a proteasome-like degradation complex; this subunit has chaperone activity. The binding of ATP and its subsequent hydrolysis by HslU are essential for unfolding of protein substrates subsequently hydrolyzed by HslV. HslU recognizes the N-terminal part of its protein substrates and unfolds these before they are guided to HslV for hydrolysis. The protein is ATP-dependent protease ATPase subunit HslU of Pseudomonas fluorescens (strain ATCC BAA-477 / NRRL B-23932 / Pf-5).